The following is a 382-amino-acid chain: MDMDSAHLDSSLLTLAFRLIKAAQTAAPSVLADLLAEGAPAWFQDDDLGWSCLHYAAERKEPECLEVLLQGGAVWNAVDKWGRTAGEICLSLGDEEGWSIIRNEGIRSEMLHHALSGTSSPDATNNIVLRAEDKTSAGDNLVFLKSKLTWDVGKDGKERVLDADGNGVMMGWEEPLMVEHVKRLTEEHPKAELGAEGMSILNVGFGLGIVDRLFQECDPKPSHHTIIEAHPQVLEYIHKKGVHLLPNVRILQGRWQDWLLDGEKVGDVLSGTPDGMGFDAIFVDTFAEGYEDLKAFFEVIPDILNADNGRFSFWNGLGATNPTIYAVSSSLAELHLEDVGLQVEWHDVLIPESMREEVWKGVRRRYWDLPGYRLPIAKMSLI.

ANK repeat units lie at residues 22-46 and 48-80; these read AAQT…FQDD and LGWS…AVDK. Residues 134 to 382 enclose the RMT2 domain; the sequence is KTSAGDNLVF…RLPIAKMSLI (249 aa). Residues F143, M177, 205–210, 228–230, 255–256, and D284 contribute to the S-adenosyl-L-methionine site; these read FGLGIV, EAH, and WQ.

The protein belongs to the class I-like SAM-binding methyltransferase superfamily. RMT2 methyltransferase family. In terms of assembly, monomer.

It localises to the cytoplasm. Its subcellular location is the nucleus. Its function is as follows. S-adenosyl-L-methionine-dependent protein-arginine N-methyltransferase that methylates the delta-nitrogen atom of arginine residues to form N5-methylarginine (type IV) in target proteins. Monomethylates ribosomal protein L12. This Cryptococcus neoformans var. neoformans serotype D (strain JEC21 / ATCC MYA-565) (Filobasidiella neoformans) protein is Protein arginine N-methyltransferase 2.